Here is a 151-residue protein sequence, read N- to C-terminus: UPF0208 membrane protein YfbV (151 aa).

2 helical membrane-spanning segments follow: residues 46 to 65 and 69 to 91; these read YAIRFMPPVAVFTLCWQIAL and LGPAVATALFALSLPMQGLWWLG.

The protein belongs to the UPF0208 family.

It localises to the cell inner membrane. The polypeptide is UPF0208 membrane protein YfbV (Salmonella choleraesuis (strain SC-B67)).